A 156-amino-acid chain; its full sequence is Transcription antitermination protein NusB (156 aa).

Belongs to the NusB family.

Involved in transcription antitermination. Required for transcription of ribosomal RNA (rRNA) genes. Binds specifically to the boxA antiterminator sequence of the ribosomal RNA (rrn) operons. In Bartonella quintana (strain Toulouse) (Rochalimaea quintana), this protein is Transcription antitermination protein NusB.